The following is a 366-amino-acid chain: Glucan organizing enzyme 1 (366 aa).

Topologically, residues 1 to 24 (MLPLWARGGKPIVIPLPQKRHITL) are extracellular. Residues 25–45 (PALPILLLLLGTGFLLHSLFF) traverse the membrane as a helical segment. Residues 46 to 366 (PPPPPHPPGK…ETYKKWKRGH (321 aa)) are Cytoplasmic-facing.

Belongs to the glycosyltransferase 32 family.

It is found in the cell membrane. Plays a role in the localization of glycogen rosettes to the plasma membrane. Required for correct cell wall organization and may facilitate the connection between beta-1,3-glucan and beta-1,6-glucan in the cell wall. The polypeptide is Glucan organizing enzyme 1 (Cryptococcus neoformans var. grubii serotype A (strain H99 / ATCC 208821 / CBS 10515 / FGSC 9487) (Filobasidiella neoformans var. grubii)).